Here is a 325-residue protein sequence, read N- to C-terminus: Glutarate 2-hydroxylase (325 aa).

Fe cation-binding residues include histidine 160, aspartate 162, and histidine 292.

Belongs to the glutarate hydroxylase family. In terms of assembly, homotetramer. Requires Fe(2+) as cofactor.

The enzyme catalyses glutarate + 2-oxoglutarate + O2 = (S)-2-hydroxyglutarate + succinate + CO2. It participates in amino-acid degradation. Functionally, acts as an alpha-ketoglutarate-dependent dioxygenase catalyzing hydroxylation of glutarate (GA) to L-2-hydroxyglutarate (L2HG). Functions in a L-lysine degradation pathway that proceeds via cadaverine, glutarate and L-2-hydroxyglutarate. This is Glutarate 2-hydroxylase from Escherichia coli O157:H7.